The primary structure comprises 480 residues: 3-isopropylmalate dehydratase large subunit (480 aa).

Residues cysteine 361, cysteine 421, and cysteine 424 each coordinate [4Fe-4S] cluster.

Belongs to the aconitase/IPM isomerase family. LeuC type 1 subfamily. In terms of assembly, heterodimer of LeuC and LeuD. [4Fe-4S] cluster is required as a cofactor.

The catalysed reaction is (2R,3S)-3-isopropylmalate = (2S)-2-isopropylmalate. The protein operates within amino-acid biosynthesis; L-leucine biosynthesis; L-leucine from 3-methyl-2-oxobutanoate: step 2/4. In terms of biological role, catalyzes the isomerization between 2-isopropylmalate and 3-isopropylmalate, via the formation of 2-isopropylmaleate. This is 3-isopropylmalate dehydratase large subunit from Corynebacterium diphtheriae (strain ATCC 700971 / NCTC 13129 / Biotype gravis).